The sequence spans 346 residues: 3 beta-hydroxysteroid dehydrogenase/Delta 5--&gt;4-isomerase (346 aa).

The Proton acceptor role is filled by tyrosine 147. Position 151 (lysine 151) interacts with NAD(+).

This sequence belongs to the 3-beta-HSD family.

The enzyme catalyses a 3beta-hydroxy-Delta(5)-steroid + NAD(+) = a 3-oxo-Delta(5)-steroid + NADH + H(+). It carries out the reaction a 3-oxo-Delta(5)-steroid = a 3-oxo-Delta(4)-steroid. Its pathway is lipid metabolism; steroid biosynthesis. Functionally, catalyzes the oxidative conversion of Delta(5)-ene-3-beta-hydroxy steroid, and the oxidative conversion of ketosteroids. The 3-beta-HSD enzymatic system plays a crucial role in the biosynthesis of all classes of hormonal steroids. During viral infection, steroid production contributes to virulence by inhibiting the host inflammatory response. The sequence is that of 3 beta-hydroxysteroid dehydrogenase/Delta 5--&gt;4-isomerase (OPG174) from Vaccinia virus (strain Western Reserve) (VACV).